The sequence spans 126 residues: Large ribosomal subunit protein uL22 (126 aa).

The protein belongs to the universal ribosomal protein uL22 family. As to quaternary structure, part of the 50S ribosomal subunit.

Its function is as follows. This protein binds specifically to 23S rRNA; its binding is stimulated by other ribosomal proteins, e.g. L4, L17, and L20. It is important during the early stages of 50S assembly. It makes multiple contacts with different domains of the 23S rRNA in the assembled 50S subunit and ribosome. In terms of biological role, the globular domain of the protein is located near the polypeptide exit tunnel on the outside of the subunit, while an extended beta-hairpin is found that lines the wall of the exit tunnel in the center of the 70S ribosome. This chain is Large ribosomal subunit protein uL22, found in Rhodospirillum rubrum (strain ATCC 11170 / ATH 1.1.1 / DSM 467 / LMG 4362 / NCIMB 8255 / S1).